We begin with the raw amino-acid sequence, 383 residues long: Na(+)/H(+) antiporter NhaA (383 aa).

11 consecutive transmembrane segments (helical) span residues 10-30, 56-76, 91-111, 121-141, 150-170, 174-194, 206-226, 254-274, 289-308, 327-347, and 355-375; these read LIGG…NNSP, LMHW…GLEI, IITP…IYLS, GWAI…ALLG, LLVI…IAIF, SLSL…IICN, VVLG…ATLA, PWII…ISFS, IIWG…LAVF, GISL…VLAF, and AIKI…YIVL.

The protein belongs to the NhaA Na(+)/H(+) (TC 2.A.33) antiporter family.

The protein localises to the cell inner membrane. The catalysed reaction is Na(+)(in) + 2 H(+)(out) = Na(+)(out) + 2 H(+)(in). Na(+)/H(+) antiporter that extrudes sodium in exchange for external protons. This is Na(+)/H(+) antiporter NhaA from Francisella tularensis subsp. tularensis (strain WY96-3418).